The following is a 218-amino-acid chain: Glutathione S-transferase-like protein OpS6 (218 aa).

The region spanning 5-86 is the GST N-terminal domain; the sequence is QPIKLYAHKK…YLIEQYDKDG (82 aa). Residues 92–218 enclose the GST C-terminal domain; that stretch reads SLQDKSLARA…KIAATKAALA (127 aa).

The protein belongs to the GST superfamily.

The protein operates within secondary metabolite biosynthesis. Its function is as follows. Glutathione S-transferase-like protein; part of the gene cluster that mediates the biosynthesis of the bibenzoquinone oosporein, a metabolite required for fungal virulence that acts by evading host immunity to facilitate fungal multiplication in insects. The non-reducing polyketide synthase OpS1 produces orsellinic acid by condensing acetyl-CoA with 3 malonyl-CoA units. Orsellinic acid is then hydroxylated to benzenetriol by the hydroxylase OpS4. The intermediate is oxidized either nonenzymatically to 5,5'-dideoxy-oosporein or enzymatically to benzenetetrol by the oxidoreductase OpS7. The latter is further dimerized to oosporein by the catalase OpS5. OpS6 probably functions en route for protecting cells against oxidative stress by scavenging any leaked free radical form of benzenetetrol by activating the thiol group of glutathione. This is Glutathione S-transferase-like protein OpS6 from Beauveria bassiana (strain ARSEF 2860) (White muscardine disease fungus).